A 383-amino-acid polypeptide reads, in one-letter code: Chaperone protein DnaJ (383 aa).

Residues 5–69 form the J domain; the sequence is DYYDILGVSK…QKRAQYDQFG (65 aa). Residues 138–222 form a CR-type zinc finger; the sequence is GKTTTIKYDR…CHGAGHVHER (85 aa). Cysteine 151, cysteine 154, cysteine 168, cysteine 171, cysteine 194, cysteine 197, cysteine 210, and cysteine 213 together coordinate Zn(2+). 4 CXXCXGXG motif repeats span residues 151-158, 168-175, 194-201, and 210-217; these read CKTCHGTG, CPRCHGAG, CPECNGTG, and CDTCHGAG.

It belongs to the DnaJ family. In terms of assembly, homodimer. It depends on Zn(2+) as a cofactor.

Its subcellular location is the cytoplasm. Functionally, participates actively in the response to hyperosmotic and heat shock by preventing the aggregation of stress-denatured proteins and by disaggregating proteins, also in an autonomous, DnaK-independent fashion. Unfolded proteins bind initially to DnaJ; upon interaction with the DnaJ-bound protein, DnaK hydrolyzes its bound ATP, resulting in the formation of a stable complex. GrpE releases ADP from DnaK; ATP binding to DnaK triggers the release of the substrate protein, thus completing the reaction cycle. Several rounds of ATP-dependent interactions between DnaJ, DnaK and GrpE are required for fully efficient folding. Also involved, together with DnaK and GrpE, in the DNA replication of plasmids through activation of initiation proteins. The chain is Chaperone protein DnaJ from Limosilactobacillus reuteri (strain DSM 20016) (Lactobacillus reuteri).